Consider the following 259-residue polypeptide: Phosphate import ATP-binding protein PstB 2 (259 aa).

Residues 12–254 (ISARGLNVHY…PKEPLTQGYI (243 aa)) form the ABC transporter domain. 44-51 (GPSGCGKS) lines the ATP pocket.

The protein belongs to the ABC transporter superfamily. Phosphate importer (TC 3.A.1.7) family. The complex is composed of two ATP-binding proteins (PstB), two transmembrane proteins (PstC and PstA) and a solute-binding protein (PstS).

The protein localises to the cell inner membrane. The catalysed reaction is phosphate(out) + ATP + H2O = ADP + 2 phosphate(in) + H(+). Its function is as follows. Part of the ABC transporter complex PstSACB involved in phosphate import. Responsible for energy coupling to the transport system. The polypeptide is Phosphate import ATP-binding protein PstB 2 (Paramagnetospirillum magneticum (strain ATCC 700264 / AMB-1) (Magnetospirillum magneticum)).